We begin with the raw amino-acid sequence, 365 residues long: DNA replication and repair protein RecF (365 aa).

30–37 (GLNAQGKT) serves as a coordination point for ATP.

It belongs to the RecF family.

Its subcellular location is the cytoplasm. Functionally, the RecF protein is involved in DNA metabolism; it is required for DNA replication and normal SOS inducibility. RecF binds preferentially to single-stranded, linear DNA. It also seems to bind ATP. This is DNA replication and repair protein RecF from Chlamydia trachomatis serovar A (strain ATCC VR-571B / DSM 19440 / HAR-13).